Consider the following 106-residue polypeptide: Replication restart protein PriB (106 aa).

Positions 4 to 103 constitute an SSB domain; the sequence is MNRLVLSGTV…LHAEQIELID (100 aa).

Belongs to the PriB family. As to quaternary structure, homodimer. Interacts with PriA and DnaT. Component of the replication restart primosome. Primosome assembly occurs via a 'hand-off' mechanism. PriA binds to replication forks, subsequently PriB then DnaT bind; DnaT then displaces ssDNA to generate the helicase loading substrate.

Involved in the restart of stalled replication forks, which reloads the replicative helicase on sites other than the origin of replication; the PriA-PriB pathway is the major replication restart pathway. During primosome assembly it facilitates complex formation between PriA and DnaT on DNA; stabilizes PriA on DNA. Stimulates the DNA unwinding activity of PriA helicase. The polypeptide is Replication restart protein PriB (Pectobacterium atrosepticum (strain SCRI 1043 / ATCC BAA-672) (Erwinia carotovora subsp. atroseptica)).